Here is a 403-residue protein sequence, read N- to C-terminus: Peroxisomal membrane protein PEX13 (403 aa).

Pro residues predominate over residues 1 to 11 (MASQPPPPPKP). The tract at residues 1 to 68 (MASQPPPPPK…PSQQTGSSSV (68 aa)) is disordered. Residues 1–134 (MASQPPPPPK…SSRGAFQSIE (134 aa)) lie on the Peroxisomal matrix side of the membrane. A compositionally biased stretch (polar residues) spans 59–68 (PSQQTGSSSV). A helical membrane pass occupies residues 135-155 (SIVHAFASVSMMMDATFSAVY). Residues 145 to 233 (MMMDATFSAV…EDRAATSAKS (89 aa)) are targeting to peroxisomes. Topologically, residues 156 to 174 (NSFRAVLDVANHFSRLKIH) are cytoplasmic. A helical transmembrane segment spans residues 175–192 (FTKVFSAFALVRTIRYLY). The interval 175-196 (FTKVFSAFALVRTIRYLYRRLQ) is interaction with PEX19. Residues 193-233 (RRLQRMLGLRRGSENEDLWAESEGTVACLGAEDRAATSAKS) are Peroxisomal matrix-facing. The helical transmembrane segment at 234 to 254 (WPIFLFFAVILGGPYLIWKLL) threads the bilayer. Residues 255–403 (STHSDEVTDS…IGKDGEKQDL (149 aa)) are Cytoplasmic-facing. Residues 272-336 (DDHVVARAEY…PANYVKILGK (65 aa)) form the SH3 domain. Position 354 is a phosphoserine (S354).

Belongs to the peroxin-13 family. In terms of assembly, interacts (via SH3 domain) with PEX14 (via SH3-binding motif); forming the PEX13-PEX14 docking complex. Interacts with PEX19.

It localises to the peroxisome membrane. Component of the PEX13-PEX14 docking complex, a translocon channel that specifically mediates the import of peroxisomal cargo proteins bound to PEX5 receptor. The PEX13-PEX14 docking complex forms a large import pore which can be opened to a diameter of about 9 nm. Mechanistically, PEX5 receptor along with cargo proteins associates with the PEX14 subunit of the PEX13-PEX14 docking complex in the cytosol, leading to the insertion of the receptor into the organelle membrane with the concomitant translocation of the cargo into the peroxisome matrix. Involved in the import of PTS1- and PTS2-type containing proteins. This Homo sapiens (Human) protein is Peroxisomal membrane protein PEX13.